The sequence spans 506 residues: 5-OH-xanthotoxin synthase (506 aa).

Residues 3-23 (PVVIFLVLAFPIASVYLLFYH) traverse the membrane as a helical segment. Positions 365 to 370 (TGPLLI) are substrate specificity. C446 contacts heme.

It belongs to the cytochrome P450 family. The cofactor is heme.

The protein localises to the microsome membrane. It carries out the reaction xanthotoxin + reduced [NADPH--hemoprotein reductase] + O2 = 5-hydroxyxanthotoxin + oxidized [NADPH--hemoprotein reductase] + H2O + 2 H(+). The protein operates within secondary metabolite biosynthesis. Functionally, involved in the biosynthesis of coumarins and furanocoumarins (FCs), natural products required for defense responses against attacks by predators with potential medical and agroindustrial usages such as anticoagulant, rodenticide and artificial vanilla substitutes. Catalyzes the conversion of xanthotoxin into 5-hydroxyxanthotoxin. The polypeptide is 5-OH-xanthotoxin synthase (Pastinaca sativa (Wild parsnip)).